The sequence spans 255 residues: Malonyl-[acyl-carrier protein] O-methyltransferase (255 aa).

Belongs to the methyltransferase superfamily.

The catalysed reaction is malonyl-[ACP] + S-adenosyl-L-methionine = malonyl-[ACP] methyl ester + S-adenosyl-L-homocysteine. The protein operates within cofactor biosynthesis; biotin biosynthesis. Its function is as follows. Converts the free carboxyl group of a malonyl-thioester to its methyl ester by transfer of a methyl group from S-adenosyl-L-methionine (SAM). It allows to synthesize pimeloyl-ACP via the fatty acid synthetic pathway. The chain is Malonyl-[acyl-carrier protein] O-methyltransferase from Acinetobacter baylyi (strain ATCC 33305 / BD413 / ADP1).